Consider the following 414-residue polypeptide: Glucose-1-phosphate adenylyltransferase (414 aa).

Residues Gly-164, 184–185 (EK), and Ser-204 each bind alpha-D-glucose 1-phosphate.

The protein belongs to the bacterial/plant glucose-1-phosphate adenylyltransferase family. As to quaternary structure, homotetramer.

The catalysed reaction is alpha-D-glucose 1-phosphate + ATP + H(+) = ADP-alpha-D-glucose + diphosphate. It participates in glycan biosynthesis; glycogen biosynthesis. In terms of biological role, involved in the biosynthesis of ADP-glucose, a building block required for the elongation reactions to produce glycogen. Catalyzes the reaction between ATP and alpha-D-glucose 1-phosphate (G1P) to produce pyrophosphate and ADP-Glc. The polypeptide is Glucose-1-phosphate adenylyltransferase (Acidothermus cellulolyticus (strain ATCC 43068 / DSM 8971 / 11B)).